A 171-amino-acid polypeptide reads, in one-letter code: Spiderine-2b (171 aa).

The signal sequence occupies residues Met1–Ala18. A propeptide spans Thr19–Arg58 (removed in mature form). Positions Lys59–Leu104 are linear cationic cytotoxin domain. Positions Asn118 to Glu171 constitute an Oxytoxin-type inhibitor cystine knot (ICK) domain. Intrachain disulfides connect Cys121-Cys135, Cys128-Cys140, Cys132-Cys167, Cys134-Cys156, and Cys142-Cys154.

This sequence belongs to the spiderine family. Cationic/spiderine subfamily. Expressed by the venom gland.

Its subcellular location is the secreted. Its function is as follows. Has antimicrobial, insecticidal, cytolytic and cytotoxic activity. The polypeptide is Spiderine-2b (Oxyopes takobius (Lynx spider)).